The following is a 321-amino-acid chain: D-alanine--D-alanine ligase (321 aa).

The ATP-grasp domain occupies 121–315 (RSWFLTNNIN…FTNLIEEIIK (195 aa)). 147–199 (PMKRPYVIKPLTQGSSIGVEVIFAEDNFNFADYDFPYGDQVIIEQYIKGRELQ) is a binding site for ATP. Residues glutamate 268, glutamate 282, and asparagine 284 each contribute to the Mg(2+) site.

Belongs to the D-alanine--D-alanine ligase family. Mg(2+) is required as a cofactor. Requires Mn(2+) as cofactor.

It is found in the cytoplasm. The enzyme catalyses 2 D-alanine + ATP = D-alanyl-D-alanine + ADP + phosphate + H(+). It functions in the pathway cell wall biogenesis; peptidoglycan biosynthesis. Cell wall formation. The polypeptide is D-alanine--D-alanine ligase (Rickettsia massiliae (strain Mtu5)).